Here is a 338-residue protein sequence, read N- to C-terminus: Methionine import ATP-binding protein MetN 1 (338 aa).

One can recognise an ABC transporter domain in the interval 2–241 (IEVRSVTKRF…PHSELGVGLL (240 aa)). 38 to 45 (GQSGAGKT) contacts ATP.

This sequence belongs to the ABC transporter superfamily. Methionine importer (TC 3.A.1.24) family. The complex is composed of two ATP-binding proteins (MetN), two transmembrane proteins (MetI) and a solute-binding protein (MetQ).

The protein localises to the cell membrane. The enzyme catalyses L-methionine(out) + ATP + H2O = L-methionine(in) + ADP + phosphate + H(+). It carries out the reaction D-methionine(out) + ATP + H2O = D-methionine(in) + ADP + phosphate + H(+). Part of the ABC transporter complex MetNIQ involved in methionine import. Responsible for energy coupling to the transport system. This chain is Methionine import ATP-binding protein MetN 1, found in Rhodococcus jostii (strain RHA1).